Reading from the N-terminus, the 282-residue chain is NADPH-dependent 7-cyano-7-deazaguanine reductase (282 aa).

Position 88–90 (88–90 (IES)) interacts with substrate. Residue 90 to 91 (SK) participates in NADPH binding. Cys-190 serves as the catalytic Thioimide intermediate. The Proton donor role is filled by Asp-197. 229 to 230 (HE) serves as a coordination point for substrate. 258–259 (RG) lines the NADPH pocket.

The protein belongs to the GTP cyclohydrolase I family. QueF type 2 subfamily. As to quaternary structure, homodimer.

It is found in the cytoplasm. The catalysed reaction is 7-aminomethyl-7-carbaguanine + 2 NADP(+) = 7-cyano-7-deazaguanine + 2 NADPH + 3 H(+). It participates in tRNA modification; tRNA-queuosine biosynthesis. In terms of biological role, catalyzes the NADPH-dependent reduction of 7-cyano-7-deazaguanine (preQ0) to 7-aminomethyl-7-deazaguanine (preQ1). In Salmonella schwarzengrund (strain CVM19633), this protein is NADPH-dependent 7-cyano-7-deazaguanine reductase.